We begin with the raw amino-acid sequence, 317 residues long: Acetyl-coenzyme A carboxylase carboxyl transferase subunit alpha (317 aa).

Residues N32 to A293 form the CoA carboxyltransferase C-terminal domain.

It belongs to the AccA family. Acetyl-CoA carboxylase is a heterohexamer composed of biotin carboxyl carrier protein (AccB), biotin carboxylase (AccC) and two subunits each of ACCase subunit alpha (AccA) and ACCase subunit beta (AccD).

The protein resides in the cytoplasm. It catalyses the reaction N(6)-carboxybiotinyl-L-lysyl-[protein] + acetyl-CoA = N(6)-biotinyl-L-lysyl-[protein] + malonyl-CoA. It functions in the pathway lipid metabolism; malonyl-CoA biosynthesis; malonyl-CoA from acetyl-CoA: step 1/1. Functionally, component of the acetyl coenzyme A carboxylase (ACC) complex. First, biotin carboxylase catalyzes the carboxylation of biotin on its carrier protein (BCCP) and then the CO(2) group is transferred by the carboxyltransferase to acetyl-CoA to form malonyl-CoA. The sequence is that of Acetyl-coenzyme A carboxylase carboxyl transferase subunit alpha from Legionella pneumophila (strain Paris).